The following is a 230-amino-acid chain: 3-dehydroquinate dehydratase (230 aa).

3-dehydroquinate contacts are provided by residues serine 26, 51–53 (EIR), and arginine 84. Histidine 127 serves as the catalytic Proton donor/acceptor. Catalysis depends on lysine 150, which acts as the Schiff-base intermediate with substrate. 3 residues coordinate 3-dehydroquinate: arginine 190, threonine 209, and glutamine 213.

It belongs to the type-I 3-dehydroquinase family. As to quaternary structure, homodimer.

The catalysed reaction is 3-dehydroquinate = 3-dehydroshikimate + H2O. Its pathway is metabolic intermediate biosynthesis; chorismate biosynthesis; chorismate from D-erythrose 4-phosphate and phosphoenolpyruvate: step 3/7. Functionally, involved in the third step of the chorismate pathway, which leads to the biosynthesis of aromatic amino acids. Catalyzes the cis-dehydration of 3-dehydroquinate (DHQ) and introduces the first double bond of the aromatic ring to yield 3-dehydroshikimate. This is 3-dehydroquinate dehydratase from Thermoplasma volcanium (strain ATCC 51530 / DSM 4299 / JCM 9571 / NBRC 15438 / GSS1).